Reading from the N-terminus, the 211-residue chain is Envelope glycoprotein (211 aa).

The Extracellular segment spans residues 1–151 (QFKRRAKYKR…FNKSPWFTTL (151 aa)). Residues 13–33 (VSLTLALLLGGLTMGGIAAGV) form a fusion peptide region. Coiled coils occupy residues 41-90 (VATQ…LLFL) and 100-136 (KEECCFYADHTGLVRDSMAKLRERLSQRQKLFESQQG). An immunosuppression region spans residues 79 to 95 (LQNRRGLDLLFLKEGGL). The CX6CC signature appears at 96–104 (CAALKEECC). A helical membrane pass occupies residues 152–172 (ISTIMGPLIILLLILLFGPCI). A lipid anchor (S-palmitoyl cysteine; by host) is attached at C171. Residues 173-211 (LNRLVQFIKDRISVVQALVLTQQYHQLKSIDPEKVESRE) lie on the Cytoplasmic side of the membrane. The YXXL motif; contains endocytosis signal motif lies at 196 to 199 (YHQL).

The mature envelope protein (Env) consists of a trimer of SU-TM heterodimers attached by a labile interchain disulfide bond. Post-translationally, specific enzymatic cleavages in vivo yield mature proteins. Envelope glycoproteins are synthesized as an inactive precursor that is N-glycosylated and processed likely by host cell furin or by a furin-like protease in the Golgi to yield the mature SU and TM proteins. The cleavage site between SU and TM requires the minimal sequence [KR]-X-[KR]-R. The R-peptide is released from the C-terminus of the cytoplasmic tail of the TM protein upon particle formation as a result of proteolytic cleavage by the viral protease. Cleavage of this peptide is required for TM to become fusogenic. The CXXC motif is highly conserved across a broad range of retroviral envelope proteins. It is thought to participate in the formation of a labile disulfide bond possibly with the CX6CC motif present in the transmembrane protein. Isomerization of the intersubunit disulfide bond to an SU intrachain disulfide bond is thought to occur upon receptor recognition in order to allow membrane fusion. In terms of processing, the transmembrane protein is palmitoylated. Post-translationally, the R-peptide is palmitoylated.

The protein resides in the virion membrane. It localises to the host cell membrane. Functionally, the surface protein (SU) attaches the virus to the host cell by binding to its receptor. This interaction triggers the refolding of the transmembrane protein (TM) and is thought to activate its fusogenic potential by unmasking its fusion peptide. Fusion occurs at the host cell plasma membrane. The transmembrane protein (TM) acts as a class I viral fusion protein. Under the current model, the protein has at least 3 conformational states: pre-fusion native state, pre-hairpin intermediate state, and post-fusion hairpin state. During viral and target cell membrane fusion, the coiled coil regions (heptad repeats) assume a trimer-of-hairpins structure, positioning the fusion peptide in close proximity to the C-terminal region of the ectodomain. The formation of this structure appears to drive apposition and subsequent fusion of viral and target cell membranes. Membranes fusion leads to delivery of the nucleocapsid into the cytoplasm. The sequence is that of Envelope glycoprotein (env) from Mus musculus (Mouse).